A 131-amino-acid polypeptide reads, in one-letter code: Global transcriptional regulator Spx (131 aa).

Residues 10–13 (CTSC) carry the CXXC motif. Cys-10 and Cys-13 are disulfide-bonded.

It belongs to the ArsC family. Spx subfamily. Interacts with the C-terminal domain of the alpha subunit of the RNAP. A single Spx monomer interacts with RNAP to form the transcription activation complex. Interacts with the adapter protein SpxH/YjbH.

It is found in the cytoplasm. With respect to regulation, under non-stress conditions, Spx is degraded by ClpXP and, to a lesser extent, by ClpCP. Efficient dedradation by ClpXP requires the adapter protein SpxH/YjbH. Binding to SpxH/YjbH reduces the overall conformational flexibility of Spx and stabilizes the C-terminal ClpX recognition region of Spx. In addition, activity is modulated by the formation of a disulfide bound within the N-terminal Cys-X-X-Cys (CXXC) motif, which is required for the transcriptional activation of trxA and trxB, or for the activation of msrAB operon expression following paraquat oxidative stress. However, it seems that formation of the disulfide bound is not essential for induction of all Spx-controlled genes, as for example the case of BSH biosynthesis genes. Similarly, induction of the Spx regulon during cell wall stress is not accompanied by oxidation of the disulfide switch, but requires Spx stabilization by the anti-adapter protein SpxO/YirB. Global transcriptional regulator that plays a key role in stress response and exerts either positive or negative regulation of genes. Acts by interacting with the C-terminal domain of the alpha subunit of the RNA polymerase (RNAP). This interaction can enhance binding of RNAP to the promoter region of target genes and stimulate their transcription, or block interaction of RNAP with activator proteins and repress transcription. Exhibits no DNA-binding activity. In terms of biological role, induces the expression of a large number of genes in response to a variety of stress conditions, such as disulfide, heat and cell wall stress, while concurrently repressing transcription of genes involved in various developmental and growth-related pathways during periods of extreme stress. Functions in the oxidative stress response via induction of the transcription of thioredoxin (trxA) and thioredoxin reductase (trxB) during thiol-specific oxidative (disulfide) stress. Mediates response to oxidative stress caused by paraquat (PQ) via induction of the methionine sulfoxide reductase genes, msrA and msrB. Also acts as a transcriptional activator of the bacillithiol (BSH) biosynthesis genes in response to oxidizing conditions and thio-reactive compounds. Involved in heat stress response and thermotolerance development, which results in diminished cellular protein aggregates. Plays an important adaptive role in the cell wall stress response. Participates in sulfate-dependent control of organosulfur metabolism. Negatively controls, via CymR, the expression of the organosulfur utilization operons ytmI, yxeI and ssu, and directly activates yrrT operon expression during growth in medium containing methionine as sole sulfur source. Negatively affects competence and sporulation. Inhibits biofilm formation in response to disulfide stress by repressing biofilm matrix genes. The polypeptide is Global transcriptional regulator Spx (Bacillus subtilis (strain 168)).